The sequence spans 442 residues: Adenylosuccinate synthetase (442 aa).

GTP contacts are provided by residues 25 to 31, 53 to 55, and lysine 62; these read GDEGKGK and GHT. Catalysis depends on aspartate 26, which acts as the Proton acceptor. Residues aspartate 26 and glycine 53 each coordinate Mg(2+). IMP contacts are provided by residues 26 to 29 and 51 to 54; these read DEGK and NAGH. Histidine 54 (proton donor) is an active-site residue. IMP-binding residues include threonine 141, arginine 155, asparagine 232, and threonine 247. Threonine 307 contributes to the GTP binding site. 307 to 313 contacts substrate; sequence TTTKRPR. Arginine 311 lines the IMP pocket. GTP-binding positions include arginine 313, 339 to 341, and 425 to 427; these read KLD and GVG.

The protein belongs to the adenylosuccinate synthetase family. In terms of assembly, homodimer. Mg(2+) is required as a cofactor.

Its subcellular location is the cytoplasm. It carries out the reaction IMP + L-aspartate + GTP = N(6)-(1,2-dicarboxyethyl)-AMP + GDP + phosphate + 2 H(+). It participates in purine metabolism; AMP biosynthesis via de novo pathway; AMP from IMP: step 1/2. With respect to regulation, inhibited by hadacidin. Activated by fructose 1,6-bisphosphate. Plays an important role in the salvage pathway for purine nucleotide biosynthesis. Catalyzes the first committed step in the biosynthesis of AMP from IMP. The protein is Adenylosuccinate synthetase (Adss) of Plasmodium falciparum.